A 250-amino-acid polypeptide reads, in one-letter code: ATP synthase subunit a (250 aa).

5 helical membrane-spanning segments follow: residues 27–47 (TDTV…AFYL), 86–106 (FVLP…WLAV), 129–149 (INYV…AGIW), 191–211 (IFAG…IMWA), and 219–239 (FDLF…ILYF).

The protein belongs to the ATPase A chain family. As to quaternary structure, F-type ATPases have 2 components, CF(1) - the catalytic core - and CF(0) - the membrane proton channel. CF(1) has five subunits: alpha(3), beta(3), gamma(1), delta(1), epsilon(1). CF(0) has three main subunits: a(1), b(2) and c(9-12). The alpha and beta chains form an alternating ring which encloses part of the gamma chain. CF(1) is attached to CF(0) by a central stalk formed by the gamma and epsilon chains, while a peripheral stalk is formed by the delta and b chains.

The protein resides in the cell membrane. Its function is as follows. Key component of the proton channel; it plays a direct role in the translocation of protons across the membrane. In Mycobacterium bovis (strain ATCC BAA-935 / AF2122/97), this protein is ATP synthase subunit a.